Reading from the N-terminus, the 335-residue chain is 2-acylglycerol O-acyltransferase 2 (335 aa).

A run of 2 helical transmembrane segments spans residues 24–44 and 104–124; these read WAVSFLAMAQCCIALYILLLF and YIMGFHPHGVLVVGAFGNFCT. N-linked (GlcNAc...) asparagine glycosylation occurs at N206.

Belongs to the diacylglycerol acyltransferase family.

Its subcellular location is the endoplasmic reticulum membrane. It is found in the cytoplasm. The protein localises to the perinuclear region. It catalyses the reaction a 2-acylglycerol + an acyl-CoA = a 1,2-diacylglycerol + CoA. The enzyme catalyses a 2-acylglycerol + an acyl-CoA = a 1,2-diacyl-sn-glycerol + CoA. It carries out the reaction a 2-acylglycerol + an acyl-CoA = a 2,3-diacyl-sn-glycerol + CoA. The catalysed reaction is a 1-acylglycerol + an acyl-CoA = a 1,2-diacylglycerol + CoA. It catalyses the reaction a 1-acylglycerol + an acyl-CoA = a 1,3-diacylglycerol + CoA. The enzyme catalyses 1-O-alkylglycerol + an acyl-CoA = 1-O-alkyl-3-acylglycerol + CoA. It carries out the reaction an acyl-CoA + a 1,2-diacyl-sn-glycerol = a triacyl-sn-glycerol + CoA. It participates in glycerolipid metabolism; triacylglycerol biosynthesis. Functionally, involved in glycerolipid synthesis and lipid metabolism. Catalyzes the formation of diacylglycerol, the precursor of triacylglycerol, by transferring the acyl chain of a fatty acyl-CoA to a monoacylglycerol. Plays a central role in absorption of dietary fat in the small intestine by catalyzing the resynthesis of triacylglycerol in enterocytes. Has a preference toward monoacylglycerols containing unsaturated fatty acids in an order of C18:3 &gt; C18:2 &gt; C18:1 &gt; C18:0 at sn-2. Able to use 1-monoalkylglycerol (1-MAkG, 1-O-alkylglycerol) as an acyl acceptor for the synthesis of monoalkyl-monoacylglycerol (MAMAG, 1-O-alkyl-3-acylglycerol or 1-O-alkyl-2-acylglycerol) and subsequently, with lower efficiency, may add another acyl chain producing monoalkyl-diacylglycerol (MADAG, 1-O-alkyl-2,3-diacylglycerol). Possesses weak but significant activity with diacylglycerol as substrate, producing triacylglycerol (triacyl-sn-glycerol). The protein is 2-acylglycerol O-acyltransferase 2 (mogat2) of Xenopus tropicalis (Western clawed frog).